The following is a 198-amino-acid chain: HTH-type transcriptional regulator BetI (198 aa).

The HTH tetR-type domain occupies 8 to 68; that stretch reads PLRRRELIDA…ATMRHLLREL (61 aa). The segment at residues 31–50 is a DNA-binding region (H-T-H motif); it reads TVAQIAHEAGVSPALAHHYF.

The protein operates within amine and polyamine biosynthesis; betaine biosynthesis via choline pathway [regulation]. In terms of biological role, repressor involved in the biosynthesis of the osmoprotectant glycine betaine. It represses transcription of the choline transporter BetT and the genes of BetAB involved in the synthesis of glycine betaine. The polypeptide is HTH-type transcriptional regulator BetI (Brucella abortus (strain 2308)).